The primary structure comprises 332 residues: L-lactate dehydrogenase (332 aa).

NAD(+)-binding positions include 29–57 (GQVGMASAFSILAQNVSKEVCLIDVCADK) and R99. Substrate-binding residues include R106, N138, and R169. N138 serves as a coordination point for NAD(+). H193 acts as the Proton acceptor in catalysis. Substrate is bound at residue T248.

Belongs to the LDH/MDH superfamily. LDH family. In terms of assembly, homotetramer.

It localises to the cytoplasm. It carries out the reaction (S)-lactate + NAD(+) = pyruvate + NADH + H(+). The protein operates within fermentation; pyruvate fermentation to lactate; (S)-lactate from pyruvate: step 1/1. The protein is L-lactate dehydrogenase of Drosophila melanogaster (Fruit fly).